The following is a 244-amino-acid chain: Proteasome subunit alpha 2 (244 aa).

The protein belongs to the peptidase T1A family. The 20S proteasome core is composed of 14 alpha and 14 beta subunits that assemble into four stacked heptameric rings, resulting in a barrel-shaped structure. The two inner rings, each composed of seven catalytic beta subunits, are sandwiched by two outer rings, each composed of seven alpha subunits. The catalytic chamber with the active sites is on the inside of the barrel. Has a gated structure, the ends of the cylinder being occluded by the N-termini of the alpha-subunits. Is capped at one or both ends by the proteasome regulatory ATPase, PAN.

The protein resides in the cytoplasm. The formation of the proteasomal ATPase PAN-20S proteasome complex, via the docking of the C-termini of PAN into the intersubunit pockets in the alpha-rings, triggers opening of the gate for substrate entry. Interconversion between the open-gate and close-gate conformations leads to a dynamic regulation of the 20S proteasome proteolysis activity. Component of the proteasome core, a large protease complex with broad specificity involved in protein degradation. In Haloarcula marismortui (strain ATCC 43049 / DSM 3752 / JCM 8966 / VKM B-1809) (Halobacterium marismortui), this protein is Proteasome subunit alpha 2.